The following is a 385-amino-acid chain: Putative non-inhibitory serpin-Z11 (385 aa).

Residues 324 to 348 (GTTAVEAMYSPSSPGYSPGYQPPRP) form an RCL region.

It belongs to the serpin family.

This chain is Putative non-inhibitory serpin-Z11, found in Oryza sativa subsp. japonica (Rice).